A 393-amino-acid chain; its full sequence is Formate-dependent phosphoribosylglycinamide formyltransferase (393 aa).

Residues 22 to 23 and Glu82 each bind N(1)-(5-phospho-beta-D-ribosyl)glycinamide; that span reads EL. Residues Arg114, Lys155, 160–165, 195–198, and Glu203 contribute to the ATP site; these read SSGKGQ and EGFI. The ATP-grasp domain occupies 119–308; sequence RLAAEELGLP…EFALHARAIL (190 aa). Glu267 and Glu279 together coordinate Mg(2+). N(1)-(5-phospho-beta-D-ribosyl)glycinamide is bound by residues Asp286, Lys356, and 363-364; that span reads RR.

The protein belongs to the PurK/PurT family. Homodimer.

It catalyses the reaction N(1)-(5-phospho-beta-D-ribosyl)glycinamide + formate + ATP = N(2)-formyl-N(1)-(5-phospho-beta-D-ribosyl)glycinamide + ADP + phosphate + H(+). It functions in the pathway purine metabolism; IMP biosynthesis via de novo pathway; N(2)-formyl-N(1)-(5-phospho-D-ribosyl)glycinamide from N(1)-(5-phospho-D-ribosyl)glycinamide (formate route): step 1/1. Involved in the de novo purine biosynthesis. Catalyzes the transfer of formate to 5-phospho-ribosyl-glycinamide (GAR), producing 5-phospho-ribosyl-N-formylglycinamide (FGAR). Formate is provided by PurU via hydrolysis of 10-formyl-tetrahydrofolate. The protein is Formate-dependent phosphoribosylglycinamide formyltransferase of Stutzerimonas stutzeri (strain A1501) (Pseudomonas stutzeri).